A 60-amino-acid polypeptide reads, in one-letter code: Putative mercuric resistance protein (60 aa).

The protein is Putative mercuric resistance protein of Shigella flexneri.